Here is a 474-residue protein sequence, read N- to C-terminus: Mitochondrial import inner membrane translocase subunit TIM44-1 (474 aa).

The N-terminal 54 residues, 1–54 (MAIRKIIRDLLITKQPLLRQLFHQRVLRANARSEFLPAIGYTSHRRFSVFTEFS), are a transit peptide targeting the mitochondrion. The stretch at 68–88 (ERTVKELKERTEEFKGVTEDL) forms a coiled coil. The segment covering 132–143 (VKESFKLGKEEN) has biased composition (basic and acidic residues). The tract at residues 132-165 (VKESFKLGKEENAESASSSGTRASQGEKQQSGST) is disordered. Over residues 145–165 (ESASSSGTRASQGEKQQSGST) the composition is skewed to polar residues.

The protein belongs to the Tim44 family. Probable component of the PAM complex at least composed of a mitochondrial HSP70 protein, TIMM44 and TIMM14. The complex interacts with the TIMM23 component of the TIM17:23 complex. Expressed in roots, flowers, young cotyledons and leaves.

It is found in the mitochondrion inner membrane. In terms of biological role, essential component of the PAM complex, a complex required for the translocation of transit peptide-containing proteins from the inner membrane into the mitochondrial matrix in an ATP-dependent manner. Recruits mitochondrial HSP70 to drive protein translocation into the matrix using ATP as an energy source. This Arabidopsis thaliana (Mouse-ear cress) protein is Mitochondrial import inner membrane translocase subunit TIM44-1 (TIM44-1).